The chain runs to 286 residues: 4-diphosphocytidyl-2-C-methyl-D-erythritol kinase (286 aa).

The active site involves Lys10. 100-110 (PMGSGLGGGSS) provides a ligand contact to ATP. Asp142 is a catalytic residue.

This sequence belongs to the GHMP kinase family. IspE subfamily. In terms of assembly, homodimer.

The catalysed reaction is 4-CDP-2-C-methyl-D-erythritol + ATP = 4-CDP-2-C-methyl-D-erythritol 2-phosphate + ADP + H(+). It participates in isoprenoid biosynthesis; isopentenyl diphosphate biosynthesis via DXP pathway; isopentenyl diphosphate from 1-deoxy-D-xylulose 5-phosphate: step 3/6. Its function is as follows. Catalyzes the phosphorylation of the position 2 hydroxy group of 4-diphosphocytidyl-2C-methyl-D-erythritol. The protein is 4-diphosphocytidyl-2-C-methyl-D-erythritol kinase of Buchnera aphidicola subsp. Acyrthosiphon pisum (strain APS) (Acyrthosiphon pisum symbiotic bacterium).